We begin with the raw amino-acid sequence, 359 residues long: 3-dehydroquinate synthase (359 aa).

Residues 69-74 (DGEAYK), 103-107 (GVIGD), 127-128 (TT), K140, K149, and 167-170 (CLKT) each bind NAD(+). Residues E182, H245, and H262 each coordinate Zn(2+).

The protein belongs to the sugar phosphate cyclases superfamily. Dehydroquinate synthase family. Requires Co(2+) as cofactor. Zn(2+) is required as a cofactor. NAD(+) serves as cofactor.

The protein localises to the cytoplasm. It catalyses the reaction 7-phospho-2-dehydro-3-deoxy-D-arabino-heptonate = 3-dehydroquinate + phosphate. It participates in metabolic intermediate biosynthesis; chorismate biosynthesis; chorismate from D-erythrose 4-phosphate and phosphoenolpyruvate: step 2/7. In terms of biological role, catalyzes the conversion of 3-deoxy-D-arabino-heptulosonate 7-phosphate (DAHP) to dehydroquinate (DHQ). This chain is 3-dehydroquinate synthase, found in Aeromonas salmonicida (strain A449).